The primary structure comprises 454 residues: L-serine dehydratase 1 (454 aa).

Belongs to the iron-sulfur dependent L-serine dehydratase family. [4Fe-4S] cluster is required as a cofactor. Activated by post-translational modification by a system involving at least three gene products. Activation is mimicked in vitro by iron and dithiothreitol. There is considerable evidence for a free-radical activation mechanism.

It catalyses the reaction L-serine = pyruvate + NH4(+). Its pathway is carbohydrate biosynthesis; gluconeogenesis. Its function is as follows. Also deaminates threonine, particularly when it is present in high concentration. The protein is L-serine dehydratase 1 (sdaA) of Escherichia coli (strain K12).